Consider the following 343-residue polypeptide: Putative trace amine-associated receptor 3 (343 aa).

The Extracellular portion of the chain corresponds to 1-35 (MDLTYIPEDLSSCPKFVNKILSSHQPLFSCPGDNV). A helical membrane pass occupies residues 36–56 (FGYDWSHDYPLFGNLVIMVSI). Over 57–68 (SHFKQLHSPTNF) the chain is Cytoplasmic. The helical transmembrane segment at 69 to 89 (LILSMATTDFLLGFVIMPYSI) threads the bilayer. Over 90-150 (MRSVESCWYF…TKMTNSTIKQ (61 aa)) the chain is Extracellular. Cysteines 104 and 189 form a disulfide. N145 is a glycosylation site (N-linked (GlcNAc...) asparagine). The chain crosses the membrane as a helical span at residues 151 to 168 (LLAFCWSVPALFSFGLVL). The Cytoplasmic portion of the chain corresponds to 169–172 (SEAD). Positions 173–186 (VSGMQSYKILVACF) are extracellular Loop 2 (ECL2). Residues 173–193 (VSGMQSYKILVACFNFCALTF) traverse the membrane as a helical segment. Topologically, residues 194–198 (NKFWG) are extracellular. The chain crosses the membrane as a helical span at residues 199–223 (TILFTTCFFTPGSIMVGIYGKIFIV). At 224 to 257 (SKQHARVISHVPENTKGAVKKHLSKKKDRKAAKT) the chain is on the cytoplasmic side. A helical transmembrane segment spans residues 258–278 (LGIVMGVFLACWLPCFLAVLI). The Extracellular portion of the chain corresponds to 279 to 287 (DPYLDYSTP). The chain crosses the membrane as a helical span at residues 288–308 (ILILDLLVWLRYFNSTCNPLI). At 309–343 (HGFFNPWFQKAFKYIVSGKIFSSHSETANLFPEAH) the chain is on the cytoplasmic side.

This sequence belongs to the G-protein coupled receptor 1 family. Not expressed in the pons, thalamus, globus pallidus, caudate, putamen or cerebellum.

It is found in the cell membrane. Functionally, putative olfactory receptor activated by several primary trace amines. The sequence is that of Putative trace amine-associated receptor 3 from Homo sapiens (Human).